We begin with the raw amino-acid sequence, 1192 residues long: Outer capsid protein VP2 (1192 aa).

Residues Ile1112–Arg1192 form a disordered region. The span at Pro1140–Thr1150 shows a compositional bias: low complexity. Residues Asn1159–Gln1183 show a composition bias toward polar residues.

The protein resides in the virion. It carries out the reaction a 5'-end diphospho-ribonucleoside in mRNA + GTP + H(+) = a 5'-end (5'-triphosphoguanosine)-ribonucleoside in mRNA + diphosphate. The enzyme catalyses a 5'-end (5'-triphosphoguanosine)-ribonucleoside in mRNA + S-adenosyl-L-methionine = a 5'-end (N(7)-methyl 5'-triphosphoguanosine)-ribonucleoside in mRNA + S-adenosyl-L-homocysteine. Its function is as follows. Outer capsid protein involved in mRNA capping. Catalyzes the last 3 enzymatic activities for formation of the 5' cap structure on the viral plus-strand transcripts, namely the RNA guanylyltransferase, RNA-7N- and RNA-2'O-methyltransferase activities. This is Outer capsid protein VP2 (S2) from Rice ragged stunt virus (isolate Thailand) (RRSV).